A 39-amino-acid polypeptide reads, in one-letter code: Photosystem II reaction center protein Psb30 (39 aa).

The helical transmembrane segment at I12–L32 threads the bilayer.

It belongs to the Psb30/Ycf12 family. PSII is composed of 1 copy each of membrane proteins PsbA, PsbB, PsbC, PsbD, PsbE, PsbF, PsbH, PsbI, PsbJ, PsbK, PsbL, PsbM, PsbT, PsbX, PsbY, PsbZ, Psb30/Ycf12, peripheral proteins PsbO, CyanoQ (PsbQ), PsbU, PsbV and a large number of cofactors. It forms dimeric complexes.

The protein resides in the cellular thylakoid membrane. A core subunit of photosystem II (PSII), probably helps stabilize the reaction center. The chain is Photosystem II reaction center protein Psb30 from Rippkaea orientalis (strain PCC 8801 / RF-1) (Cyanothece sp. (strain PCC 8801)).